An 898-amino-acid polypeptide reads, in one-letter code: Dipeptidyl peptidase 8 (898 aa).

Active-site charge relay system residues include S755, D833, and H865.

This sequence belongs to the peptidase S9B family. DPPIV subfamily. Homodimer. Forms a ternary complex with NLRP1, composed of a DPP8 homodimer, one full-length NLRP1 protein, and one cleaved C-terminus of NLRP1 (NACHT, LRR and PYD domains-containing protein 1, C-terminus). Forms a ternary complex with CARD8, composed of a DPP8 homodimer, one full-length NLRP1 protein, and one cleaved C-terminus of CARD8 (Caspase recruitment domain-containing protein 8, C-terminus). In the ternary complex, only one subunit of the DPP8 homodimer is bound to NLRP1 or CARD8. In terms of tissue distribution, ubiquitously expressed, with highest levels in testis, placenta, prostate, muscle and brain.

Its subcellular location is the cytoplasm. The catalysed reaction is Release of an N-terminal dipeptide, Xaa-Yaa-|-Zaa-, from a polypeptide, preferentially when Yaa is Pro, provided Zaa is neither Pro nor hydroxyproline.. With respect to regulation, inhibited by zinc. Inhibited by the serine proteinase inhibitor 4-(2-aminoethyl)benzenesulphonyl fluoride (AEBSF), and by di-isopropylfluorophosphate. Specifically inhibited by isoindoline derivatives. Inhibited by Val-boroPro (Talabostat, PT-100), a non-selective inhibitor, which triggers pyroptosis in monocytes and macrophages. Dipeptidyl peptidase that cleaves off N-terminal dipeptides from proteins having a Pro or Ala residue at position 2. Acts as a key inhibitor of caspase-1-dependent monocyte and macrophage pyroptosis in resting cells by preventing activation of NLRP1 and CARD8. Sequesters the cleaved C-terminal part of NLRP1 and CARD8, which respectively constitute the active part of the NLRP1 and CARD8 inflammasomes, in a ternary complex, thereby preventing their oligomerization and activation. The dipeptidyl peptidase activity is required to suppress NLRP1 and CARD8; however, neither NLRP1 nor CARD8 are bona fide substrates of DPP8, suggesting the existence of substrate(s) required for NLRP1 and CARD8 inhibition. This is Dipeptidyl peptidase 8 from Homo sapiens (Human).